A 153-amino-acid polypeptide reads, in one-letter code: Large ribosomal subunit protein uL22 (153 aa).

Belongs to the universal ribosomal protein uL22 family. Part of the 50S ribosomal subunit.

Functionally, this protein binds specifically to 23S rRNA. It makes multiple contacts with different domains of the 23S rRNA in the assembled 50S subunit and ribosome. Its function is as follows. The globular domain of the protein is located near the polypeptide exit tunnel on the outside of the subunit, while an extended beta-hairpin is found that lines the wall of the exit tunnel in the center of the 70S ribosome. This is Large ribosomal subunit protein uL22 from Methanococcus maripaludis (strain C5 / ATCC BAA-1333).